The chain runs to 267 residues: L-aspartate dehydrogenase 2 (267 aa).

2 residues coordinate NAD(+): Ala123 and Asn189. His219 is a catalytic residue.

It belongs to the L-aspartate dehydrogenase family.

It catalyses the reaction L-aspartate + NADP(+) + H2O = oxaloacetate + NH4(+) + NADPH + H(+). The catalysed reaction is L-aspartate + NAD(+) + H2O = oxaloacetate + NH4(+) + NADH + H(+). It participates in cofactor biosynthesis; NAD(+) biosynthesis; iminoaspartate from L-aspartate (dehydrogenase route): step 1/1. Functionally, specifically catalyzes the NAD or NADP-dependent dehydrogenation of L-aspartate to iminoaspartate. The protein is L-aspartate dehydrogenase 2 of Bordetella bronchiseptica (strain ATCC BAA-588 / NCTC 13252 / RB50) (Alcaligenes bronchisepticus).